The sequence spans 329 residues: 4-hydroxythreonine-4-phosphate dehydrogenase (329 aa).

Positions 136 and 137 each coordinate substrate. H166, H211, and H266 together coordinate a divalent metal cation. K274, N283, and R292 together coordinate substrate.

Belongs to the PdxA family. Homodimer. Zn(2+) is required as a cofactor. Requires Mg(2+) as cofactor. Co(2+) serves as cofactor.

It localises to the cytoplasm. The enzyme catalyses 4-(phosphooxy)-L-threonine + NAD(+) = 3-amino-2-oxopropyl phosphate + CO2 + NADH. The protein operates within cofactor biosynthesis; pyridoxine 5'-phosphate biosynthesis; pyridoxine 5'-phosphate from D-erythrose 4-phosphate: step 4/5. Catalyzes the NAD(P)-dependent oxidation of 4-(phosphooxy)-L-threonine (HTP) into 2-amino-3-oxo-4-(phosphooxy)butyric acid which spontaneously decarboxylates to form 3-amino-2-oxopropyl phosphate (AHAP). The polypeptide is 4-hydroxythreonine-4-phosphate dehydrogenase (Neisseria meningitidis serogroup A / serotype 4A (strain DSM 15465 / Z2491)).